A 277-amino-acid chain; its full sequence is Alpha carbonic anhydrase 3 (277 aa).

Residues 1 to 19 (MKTIILFVTFLALSSSSLA) form the signal peptide. The region spanning 24–259 (TEFHYKPGEI…LNGRLVYLNE (236 aa)) is the Alpha-carbonic anhydrase domain. A disulfide bridge links Cys49 with Cys209. Residues Asn70 and Asn107 are each glycosylated (N-linked (GlcNAc...) asparagine). The Zn(2+) site is built by His117, His119, and His136. A substrate-binding site is contributed by 205-206 (TT). Residues 257–277 (LNEQSSPSPTPRLRIPRVGPV) form a disordered region.

This sequence belongs to the alpha-class carbonic anhydrase family. Requires Zn(2+) as cofactor. In terms of processing, N-glycosylated. In terms of tissue distribution, expressed in flowers and siliques.

The protein resides in the plastid. The protein localises to the chloroplast stroma. The catalysed reaction is hydrogencarbonate + H(+) = CO2 + H2O. Its function is as follows. Reversible hydration of carbon dioxide. The polypeptide is Alpha carbonic anhydrase 3 (ACA3) (Arabidopsis thaliana (Mouse-ear cress)).